A 692-amino-acid chain; its full sequence is Glycine--tRNA ligase beta subunit (692 aa).

The protein belongs to the class-II aminoacyl-tRNA synthetase family. In terms of assembly, tetramer of two alpha and two beta subunits.

Its subcellular location is the cytoplasm. It carries out the reaction tRNA(Gly) + glycine + ATP = glycyl-tRNA(Gly) + AMP + diphosphate. The sequence is that of Glycine--tRNA ligase beta subunit from Limosilactobacillus fermentum (strain NBRC 3956 / LMG 18251) (Lactobacillus fermentum).